The following is a 407-amino-acid chain: (R)-phenyllactyl-CoA dehydratase alpha subunit (407 aa).

Positions 1-4 (MSDR) are excised as a propeptide.

It belongs to the FldB/FldC dehydratase alpha/beta subunit family. As to quaternary structure, part of the heterotrimeric phenyllactate dehydratase complex FldABC, composed of (R)-phenyllactate CoA-transferase (FldA) and a heterodimeric (R)-phenyllactyl-CoA dehydratase (FldB and FldC). The cofactor is [4Fe-4S] cluster. No flavin could be detected in the FldABC complex, and the addition of FAD, FMN or riboflavin to the dehydratase do not increase enzymatic activity. serves as cofactor.

The enzyme catalyses (R)-3-phenyllactoyl-CoA = (E)-cinnamoyl-CoA + H2O. It carries out the reaction (R)-3-(4-hydroxyphenyl)lactoyl-CoA = (E)-4-coumaroyl-CoA + H2O. It catalyses the reaction (R)-3-(indol-3-yl)lactoyl-CoA = (E)-3-(indol-3-yl)acryloyl-CoA + H2O. It participates in amino-acid degradation; L-phenylalanine degradation. Its function is as follows. Component of the phenyllactate dehydratase complex FldABC that is involved in the fermentation of L-phenylalanine via a Stickland reaction. This complex catalyzes the reversible syn-dehydration of (R)-phenyllactate to (E)-cinnamate in two steps, a CoA-transfer from cinnamoyl-CoA to phenyllactate, catalyzed by FldA, followed by the dehydration of phenyllactyl-CoA to cinnamoyl-CoA, catalyzed by FldB and FldC. Requires the activator FldI to initiate catalysis. The chain is (R)-phenyllactyl-CoA dehydratase alpha subunit from Clostridium sporogenes.